The primary structure comprises 392 residues: Keratin, type I cuticular Ha4 (392 aa).

Residues 1–56 (MSCESCLPALSCRTSCSSRPCVPPSCHGCTLPGACNIPANVGNCNWFCEGSFNGNE) are head. An IF rod domain is found at 56 to 367 (EKETMQFLND…SLLESEDCNL (312 aa)). Residues 57-91 (KETMQFLNDRLASYMEKVRQLERENAELECRIQER) form a coil 1A region. The tract at residues 92–102 (NQQQDPLVCPA) is linker 1. The tract at residues 103 to 203 (YQAYFRTIEE…HEEEVNTLRC (101 aa)) is coil 1B. Positions 204–219 (QLGDRLNVEVDAAPTV) are linker 12. The interval 220–363 (DLNRVLNETR…NTYRSLLESE (144 aa)) is coil 2. Residues 364 to 392 (DCNLPCNPCATTNASGSCCGPCGSSKRCC) form a tail region.

The protein belongs to the intermediate filament family. In terms of tissue distribution, expressed in the hair root in the hair shaft cuticle and cortex.

The protein is Keratin, type I cuticular Ha4 of Mus musculus (Mouse).